The primary structure comprises 382 residues: Lactosylceramide 1,3-N-acetyl-beta-D-glucosaminyltransferase B (382 aa).

Residues 1 to 13 (MAVLKMPRFKKYH) are Cytoplasmic-facing. Residues 14-30 (LRLMITCFSTLLLMTYW) traverse the membrane as a helical; Signal-anchor for type II membrane protein segment. The Lumenal segment spans residues 31 to 382 (EKIDNCVVTH…CKAAFFEEDT (352 aa)). N-linked (GlcNAc...) asparagine glycosylation is found at N57, N112, N167, and N276.

It belongs to the glycosyltransferase 31 family.

It localises to the golgi apparatus membrane. The enzyme catalyses a beta-D-Gal-(1-&gt;4)-beta-D-Glc-(1&lt;-&gt;1)-Cer(d18:1(4E)) + UDP-N-acetyl-alpha-D-glucosamine = a beta-D-GlcNAc-(1-&gt;3)-beta-D-Gal-(1-&gt;4)-beta-D-Glc-(1&lt;-&gt;1)-Cer(d18:1(4E)) + UDP + H(+). It carries out the reaction a neolactoside nLc4Cer(d18:1(4E)) + UDP-N-acetyl-alpha-D-glucosamine = a neolactoside IV(3)-beta-GlcNAc-nLc4Cer(d18:1(4E)) + UDP + H(+). It participates in protein modification; protein glycosylation. Functionally, beta-1,3-N-acetylglucosaminyltransferase that plays a key role in the synthesis of lacto- or neolacto-series carbohydrate chains on glycolipids. In Danio rerio (Zebrafish), this protein is Lactosylceramide 1,3-N-acetyl-beta-D-glucosaminyltransferase B (b3gnt5b).